The chain runs to 171 residues: Sec-independent protein translocase protein TatB (171 aa).

A helical membrane pass occupies residues 1–21; that stretch reads MFDIGFSELLLVFIIGLVVLG. Residues 117–171 are disordered; that stretch reads KDNEAAHEGVTPAAAQTQASSPEQKPETTPEPVVKPAADAEPKTAAPSPSSSDKP. The span at 130 to 139 shows a compositional bias: polar residues; sequence AAQTQASSPE.

It belongs to the TatB family. The Tat system comprises two distinct complexes: a TatABC complex, containing multiple copies of TatA, TatB and TatC subunits, and a separate TatA complex, containing only TatA subunits. Substrates initially bind to the TatABC complex, which probably triggers association of the separate TatA complex to form the active translocon.

The protein resides in the cell inner membrane. In terms of biological role, part of the twin-arginine translocation (Tat) system that transports large folded proteins containing a characteristic twin-arginine motif in their signal peptide across membranes. Together with TatC, TatB is part of a receptor directly interacting with Tat signal peptides. TatB may form an oligomeric binding site that transiently accommodates folded Tat precursor proteins before their translocation. This chain is Sec-independent protein translocase protein TatB, found in Escherichia coli O157:H7.